Consider the following 177-residue polypeptide: Large ribosomal subunit protein bL19 (177 aa).

Belongs to the bacterial ribosomal protein bL19 family.

In terms of biological role, this protein is located at the 30S-50S ribosomal subunit interface and may play a role in the structure and function of the aminoacyl-tRNA binding site. This is Large ribosomal subunit protein bL19 from Sinorhizobium medicae (strain WSM419) (Ensifer medicae).